We begin with the raw amino-acid sequence, 393 residues long: MTVPATRNDLMIVNMGPHHPSMHGVLRLIVTLDGEDVIDCEPILGYLHRGMEKIAENRTIIQYLPYVTRWDYLATMFTEAITVNAPEELGNIQVPRRASYIRVIMLELSRIASHLLWLGPFMADIGAQTPFFYIFRERELLYDLFETATGMRMMHNFFRIGGVAADLPHGWIDKCLDFCDYFLPEVAEYQKLITRNPIFLERVEGVGFIAEEEAINWGLSGPMLRASGIPWDLRKVDHYECYDEFDWEVQWQKEGDSLARYLVRISEMIESVKIIQQALEGIPGGPYENLEARRFDRVRNIEWNDFEYRFISKKPSPTFELSKQELYVRVEAPKGELGIFLIGDNSVFPWRWKIRPPGLINLQILPQLVKRMKLADIMTILGSIDIIMGEVDR.

This sequence belongs to the complex I 49 kDa subunit family. As to quaternary structure, NDH is composed of at least 16 different subunits, 5 of which are encoded in the nucleus.

Its subcellular location is the plastid. The protein localises to the chloroplast thylakoid membrane. The enzyme catalyses a plastoquinone + NADH + (n+1) H(+)(in) = a plastoquinol + NAD(+) + n H(+)(out). It catalyses the reaction a plastoquinone + NADPH + (n+1) H(+)(in) = a plastoquinol + NADP(+) + n H(+)(out). In terms of biological role, NDH shuttles electrons from NAD(P)H:plastoquinone, via FMN and iron-sulfur (Fe-S) centers, to quinones in the photosynthetic chain and possibly in a chloroplast respiratory chain. The immediate electron acceptor for the enzyme in this species is believed to be plastoquinone. Couples the redox reaction to proton translocation, and thus conserves the redox energy in a proton gradient. The sequence is that of NAD(P)H-quinone oxidoreductase subunit H, chloroplastic from Amborella trichopoda.